The primary structure comprises 453 residues: Obtusifoliol 14-alpha demethylase (453 aa).

Residue Cys395 participates in heme binding.

Belongs to the cytochrome P450 family. Requires heme as cofactor.

The protein resides in the membrane. It catalyses the reaction a 14alpha-methyl steroid + 3 reduced [NADPH--hemoprotein reductase] + 3 O2 = a Delta(14) steroid + formate + 3 oxidized [NADPH--hemoprotein reductase] + 4 H2O + 4 H(+). Its pathway is steroid biosynthesis; zymosterol biosynthesis; zymosterol from lanosterol: step 1/6. Its function is as follows. Catalyzes the 14-alpha demethylation of obtusifoliol to 4 alpha-methyl-5 alpha-ergosta-8,14,24(28)-trien-3 beta-ol. In Triticum aestivum (Wheat), this protein is Obtusifoliol 14-alpha demethylase (CYP51).